Consider the following 95-residue polypeptide: Small ribosomal subunit protein bS6 (95 aa).

The protein belongs to the bacterial ribosomal protein bS6 family.

Its function is as follows. Binds together with bS18 to 16S ribosomal RNA. This Exiguobacterium sp. (strain ATCC BAA-1283 / AT1b) protein is Small ribosomal subunit protein bS6.